Consider the following 275-residue polypeptide: 2,3,4,5-tetrahydropyridine-2,6-dicarboxylate N-succinyltransferase (275 aa).

Residues arginine 104 and aspartate 141 each coordinate substrate.

The protein belongs to the transferase hexapeptide repeat family. In terms of assembly, homotrimer.

The protein resides in the cytoplasm. It catalyses the reaction (S)-2,3,4,5-tetrahydrodipicolinate + succinyl-CoA + H2O = (S)-2-succinylamino-6-oxoheptanedioate + CoA. It functions in the pathway amino-acid biosynthesis; L-lysine biosynthesis via DAP pathway; LL-2,6-diaminopimelate from (S)-tetrahydrodipicolinate (succinylase route): step 1/3. The chain is 2,3,4,5-tetrahydropyridine-2,6-dicarboxylate N-succinyltransferase from Aeromonas hydrophila subsp. hydrophila (strain ATCC 7966 / DSM 30187 / BCRC 13018 / CCUG 14551 / JCM 1027 / KCTC 2358 / NCIMB 9240 / NCTC 8049).